A 26-amino-acid chain; its full sequence is Fumarylacetoacetate hydrolase domain-containing protein 2A (26 aa).

This sequence belongs to the FAH family. The cofactor is Ca(2+). Requires Mg(2+) as cofactor.

May have hydrolase activity. This Mesocricetus auratus (Golden hamster) protein is Fumarylacetoacetate hydrolase domain-containing protein 2A.